The following is a 438-amino-acid chain: MDSTLISTRPDEGTLSLSRARRAALGSFAGAVVDWYDFLLYGITAALVFNREFFPQVSPAMGTLAAFATFGVGFLFRPLGGVIFGHFGDRLGRKRMLMLTVWMMGIATALIGILPSFSTIGWWAPILLVTLRAIQGFAVGGEWGGAALLSVESAPKNKKAFYSSGVQVGYGVGLLLSTGLVSLISMMTTDEQFLSWGWRIPFLFSIVLVLGALWVRNGMEESAEFEQQQHYQAAAKKRIPVIEALLRHPGAFLKIIALRLCELLTMYIVTAFALNYSTQNMGLPRELFLNIGLLVGGLSCLTIPCFAWLADRFGRRRVYITGTLIGTLSAFPFFMALEAQSIFWIVFFSIMLANIAHDMVVCVQQPMFTEMFGASYRYSGAGVGYQVASVVGGGFTPFIAAALITYFAGNWHSVAIYLLAGCLISAMTALLMKDSQRA.

Transmembrane regions (helical) follow at residues 28–48 (FAGA…AALV), 64–84 (LAAF…GVIF), 109–129 (ALIG…ILLV), 133–153 (AIQG…SVES), 168–188 (VGYG…SMMT), 193–213 (FLSW…LGAL), 255–275 (IIAL…FALN), 287–307 (LFLN…PCFA), 318–337 (VYIT…FMAL), 341–363 (SIFW…VVCV), 387–407 (VASV…ITYF), and 411–431 (WHSV…TALL).

This sequence belongs to the major facilitator superfamily. Metabolite:H+ Symporter (MHS) family (TC 2.A.1.6) family.

It is found in the cell inner membrane. The catalysed reaction is shikimate(in) + H(+)(in) = shikimate(out) + H(+)(out). In terms of biological role, involved in the uptake of shikimate, an intermediate in the aromatic amino acid biosynthetic pathway. The protein is Shikimate transporter of Escherichia coli (strain K12).